The sequence spans 476 residues: Replication factor C large subunit (476 aa).

Residue 50–57 (GPPGVGKT) coordinates ATP. The segment at 447–476 (YEKGTKKGKGEKRRKGSDEGSGLLKWLKKD) is disordered. Residues 452 to 461 (KKGKGEKRRK) show a composition bias toward basic residues.

This sequence belongs to the activator 1 small subunits family. RfcL subfamily. In terms of assembly, heteromultimer composed of small subunits (RfcS) and large subunits (RfcL).

In terms of biological role, part of the RFC clamp loader complex which loads the PCNA sliding clamp onto DNA. In Ignicoccus hospitalis (strain KIN4/I / DSM 18386 / JCM 14125), this protein is Replication factor C large subunit.